The sequence spans 393 residues: Methylthioribose kinase (393 aa).

ATP is bound by residues asparagine 38, lysine 53, and 107-109 (EDL). Aspartate 225 serves as a coordination point for substrate. An ATP-binding site is contributed by 242-244 (DPE). Arginine 332 lines the substrate pocket.

Belongs to the methylthioribose kinase family. As to quaternary structure, homodimer.

It carries out the reaction 5-(methylsulfanyl)-D-ribose + ATP = 5-(methylsulfanyl)-alpha-D-ribose 1-phosphate + ADP + H(+). The protein operates within amino-acid biosynthesis; L-methionine biosynthesis via salvage pathway; S-methyl-5-thio-alpha-D-ribose 1-phosphate from S-methyl-5'-thioadenosine (hydrolase route): step 2/2. Catalyzes the phosphorylation of methylthioribose into methylthioribose-1-phosphate. In Bacillus cereus (strain 03BB102), this protein is Methylthioribose kinase.